A 165-amino-acid chain; its full sequence is Small ribosomal subunit protein uS5 (165 aa).

The S5 DRBM domain occupies 13-76; that stretch reads LEEKVLVVNR…EAARKNLITI (64 aa).

Belongs to the universal ribosomal protein uS5 family. In terms of assembly, part of the 30S ribosomal subunit. Contacts proteins S4 and S8.

Its function is as follows. With S4 and S12 plays an important role in translational accuracy. In terms of biological role, located at the back of the 30S subunit body where it stabilizes the conformation of the head with respect to the body. The chain is Small ribosomal subunit protein uS5 from Chlamydia felis (strain Fe/C-56) (Chlamydophila felis).